A 58-amino-acid polypeptide reads, in one-letter code: Photosystem II reaction center protein K (58 aa).

The propeptide occupies 1-21; that stretch reads MLNMISTFFDSSSNFSEAFLA. A helical membrane pass occupies residues 29–49; sequence IFDPIVDVMPIIPVFFLLLAF.

The protein belongs to the PsbK family. PSII is composed of 1 copy each of membrane proteins PsbA, PsbB, PsbC, PsbD, PsbE, PsbF, PsbH, PsbI, PsbJ, PsbK, PsbL, PsbM, PsbT, PsbX, PsbY, PsbZ, Psb30/Ycf12, at least 3 peripheral proteins of the oxygen-evolving complex and a large number of cofactors. It forms dimeric complexes.

It localises to the plastid. Its subcellular location is the chloroplast thylakoid membrane. In terms of biological role, one of the components of the core complex of photosystem II (PSII). PSII is a light-driven water:plastoquinone oxidoreductase that uses light energy to abstract electrons from H(2)O, generating O(2) and a proton gradient subsequently used for ATP formation. It consists of a core antenna complex that captures photons, and an electron transfer chain that converts photonic excitation into a charge separation. This Chaetosphaeridium globosum (Charophycean green alga) protein is Photosystem II reaction center protein K.